A 348-amino-acid chain; its full sequence is UDP-3-O-acylglucosamine N-acyltransferase (348 aa).

The Proton acceptor role is filled by His-241.

Belongs to the transferase hexapeptide repeat family. LpxD subfamily. As to quaternary structure, homotrimer.

The enzyme catalyses a UDP-3-O-[(3R)-3-hydroxyacyl]-alpha-D-glucosamine + a (3R)-hydroxyacyl-[ACP] = a UDP-2-N,3-O-bis[(3R)-3-hydroxyacyl]-alpha-D-glucosamine + holo-[ACP] + H(+). It functions in the pathway bacterial outer membrane biogenesis; LPS lipid A biosynthesis. Functionally, catalyzes the N-acylation of UDP-3-O-acylglucosamine using 3-hydroxyacyl-ACP as the acyl donor. Is involved in the biosynthesis of lipid A, a phosphorylated glycolipid that anchors the lipopolysaccharide to the outer membrane of the cell. The chain is UDP-3-O-acylglucosamine N-acyltransferase from Neisseria meningitidis serogroup C / serotype 2a (strain ATCC 700532 / DSM 15464 / FAM18).